Here is a 115-residue protein sequence, read N- to C-terminus: Large ribosomal subunit protein bL19 (115 aa).

The protein belongs to the bacterial ribosomal protein bL19 family.

This protein is located at the 30S-50S ribosomal subunit interface and may play a role in the structure and function of the aminoacyl-tRNA binding site. The polypeptide is Large ribosomal subunit protein bL19 (Streptococcus pyogenes serotype M1).